The following is an 843-amino-acid chain: Protein P (843 aa).

Residues Met1–Gln177 are terminal protein domain (TP). Positions Glu178–Leu346 are spacer. Disordered stretches follow at residues Gly224–Ser273 and His288–Ser316. Residues His288–Gly299 show a composition bias toward polar residues. The segment at Glu347–Gln690 is polymerase/reverse transcriptase domain (RT). Positions Glu357–Ile600 constitute a Reverse transcriptase domain. Mg(2+)-binding residues include Asp429, Asp551, and Asp552.

Belongs to the hepadnaviridae P protein family.

It carries out the reaction DNA(n) + a 2'-deoxyribonucleoside 5'-triphosphate = DNA(n+1) + diphosphate. It catalyses the reaction Endonucleolytic cleavage to 5'-phosphomonoester.. Its activity is regulated as follows. Activated by host HSP70 and HSP40 in vitro to be able to bind the epsilon loop of the pgRNA. Because deletion of the RNase H region renders the protein partly chaperone-independent, the chaperones may be needed indirectly to relieve occlusion of the RNA-binding site by this domain. Inhibited by several reverse-transcriptase inhibitors: Lamivudine, Adefovir and Entecavir. Functionally, multifunctional enzyme that converts the viral RNA genome into dsDNA in viral cytoplasmic capsids. This enzyme displays a DNA polymerase activity that can copy either DNA or RNA templates, and a ribonuclease H (RNase H) activity that cleaves the RNA strand of RNA-DNA heteroduplexes in a partially processive 3'- to 5'-endonucleasic mode. Neo-synthesized pregenomic RNA (pgRNA) are encapsidated together with the P protein, and reverse-transcribed inside the nucleocapsid. Initiation of reverse-transcription occurs first by binding the epsilon loop on the pgRNA genome, and is initiated by protein priming, thereby the 5'-end of (-)DNA is covalently linked to P protein. Partial (+)DNA is synthesized from the (-)DNA template and generates the relaxed circular DNA (RC-DNA) genome. After budding and infection, the RC-DNA migrates in the nucleus, and is converted into a plasmid-like covalently closed circular DNA (cccDNA). The activity of P protein does not seem to be necessary for cccDNA generation, and is presumably released from (+)DNA by host nuclear DNA repair machinery. In Homo sapiens (Human), this protein is Protein P.